The sequence spans 67 residues: MARITVEDCLKQIPNRFELALAATYRARQLAQGHTPKIESRDKPTVVALREIAAGQVGLEMLKKVPV.

Belongs to the RNA polymerase subunit omega family. The RNAP catalytic core consists of 2 alpha, 1 beta, 1 beta' and 1 omega subunit. When a sigma factor is associated with the core the holoenzyme is formed, which can initiate transcription.

It carries out the reaction RNA(n) + a ribonucleoside 5'-triphosphate = RNA(n+1) + diphosphate. Promotes RNA polymerase assembly. Latches the N- and C-terminal regions of the beta' subunit thereby facilitating its interaction with the beta and alpha subunits. This chain is DNA-directed RNA polymerase subunit omega, found in Burkholderia multivorans (strain ATCC 17616 / 249).